Reading from the N-terminus, the 367-residue chain is Alanine racemase (367 aa).

Catalysis depends on Lys-35, which acts as the Proton acceptor; specific for D-alanine. N6-(pyridoxal phosphate)lysine is present on Lys-35. A substrate-binding site is contributed by Arg-130. Catalysis depends on Tyr-258, which acts as the Proton acceptor; specific for L-alanine. Met-306 contributes to the substrate binding site.

This sequence belongs to the alanine racemase family. It depends on pyridoxal 5'-phosphate as a cofactor.

It carries out the reaction L-alanine = D-alanine. It participates in amino-acid biosynthesis; D-alanine biosynthesis; D-alanine from L-alanine: step 1/1. Catalyzes the interconversion of L-alanine and D-alanine. May also act on other amino acids. This chain is Alanine racemase (alr), found in Acinetobacter baumannii (strain SDF).